Reading from the N-terminus, the 491-residue chain is Serine/threonine-protein kinase 3 (491 aa).

Residue methionine 1 is modified to N-acetylmethionine. The residue at position 15 (serine 15) is a Phosphoserine; by PLK1. Residues 27-278 enclose the Protein kinase domain; that stretch reads FDVLEKLGEG…ATQLLQHPFI (252 aa). Residues 33 to 41 and lysine 56 contribute to the ATP site; that span reads LGEGSYGSV. Threonine 117 is subject to Phosphothreonine; by PKB/AKT1. Aspartate 146 functions as the Proton acceptor in the catalytic mechanism. Asparagine 151 and aspartate 164 together coordinate Mg(2+). A phosphothreonine; by autocatalysis mark is found at threonine 174 and threonine 180. Residues 287 to 328 are a coiled coil; it reads LRDLITEAMEIKAKRHEEQQRELEEEEENSDEDELDSHTMVK. The segment at 301–327 is disordered; that stretch reads RHEEQQRELEEEEENSDEDELDSHTMV. Residues 309 to 321 show a composition bias toward acidic residues; the sequence is LEEEEENSDEDEL. At serine 316 the chain carries Phosphoserine. Phosphothreonine; by autocatalysis is present on residues threonine 336 and threonine 378. Positions 370-392 are disordered; that stretch reads EDEEEEDGTMKRNATSPQVQRPS. Polar residues predominate over residues 381–390; it reads RNATSPQVQR. Residue threonine 384 is modified to Phosphothreonine; by PKB/AKT1. 2 positions are modified to phosphoserine: serine 385 and serine 444. Residues 437 to 484 enclose the SARAH domain; it reads FDFLKNLSLEELQMRLKALDPMMEREIEELRQRYTAKRQPILDAMDAK. Residues 442-475 adopt a coiled-coil conformation; that stretch reads NLSLEELQMRLKALDPMMEREIEELRQRYTAKRQ.

Belongs to the protein kinase superfamily. STE Ser/Thr protein kinase family. STE20 subfamily. As to quaternary structure, homodimer; mediated via the coiled-coil region. Interacts with NORE1, which inhibits autoactivation. Interacts with and stabilizes SAV1. Interacts with RAF1, which prevents dimerization and phosphorylation. Interacts with RASSF1. Interacts (via SARAH domain) with isoform 1 of NEK2. Interacts with ESR1 only in the presence of SAV1. Interacts with PKB/AKT1. Forms a tripartite complex with MOBKL1B and STK38. Interacts with RASSF2 (via SARAH domain). Interacts with DLG5 (via PDZ domain 3). Interacts with LATS1; this interaction is inhibited in the presence of DLG5. Interacts with MARK3 in the presence of DLG5. Interacts with RASSF5; this interaction inhibits STK3 autoactivation through heterodimerization. Interacts (when phosphorylated) with SLMAP (via FHA domain); the interaction associates STK3 with the STRIPAK complex. Mg(2+) is required as a cofactor. Autophosphorylated on two residues Thr-174 and Thr-180, leading to activation. Phosphorylation at Thr-117 and Thr-384 by PKB/AKT1, leads to inhibition of its: cleavage, kinase activity, autophosphorylation at Thr-180, binding to RASSF1 and nuclear translocation, and increase in its binding to RAF1. Phosphorylated at Ser-15 by PLK1, leading to activation. When autophosphorylated at Thr-180, recruits STRIPAK complex and promotes PP2A-mediated dephosphorylation and inactivation of STK3. Post-translationally, proteolytically cleaved by caspase-3 during apoptosis. Proteolytic cleavage results in kinase activation and nuclear translocation of the truncated form (MST1/N). In terms of processing, ubiquitinated by TRIM69; leading to its redistribution to the perinuclear cytoskeleton, where it is phosphorylated by PLK1 and subsequently activated. In terms of tissue distribution, expressed at high levels in adult kidney, skeletal and placenta tissues and at very low levels in adult heart, lung and brain tissues.

It is found in the cytoplasm. The protein localises to the nucleus. The protein resides in the cytoskeleton. Its subcellular location is the microtubule organizing center. It localises to the centrosome. The catalysed reaction is L-seryl-[protein] + ATP = O-phospho-L-seryl-[protein] + ADP + H(+). It catalyses the reaction L-threonyl-[protein] + ATP = O-phospho-L-threonyl-[protein] + ADP + H(+). With respect to regulation, inhibited by the C-terminal non-catalytic region. Activated by caspase-cleavage. Full activation also requires homodimerization and autophosphorylation of Thr-180, which are inhibited by the proto-oncogene product RAF1. Activated by RASSF1 which acts by preventing its dephosphorylation. When autophosphorylated at Thr-180, recruits STRIPAK complex and promotes PP2A-mediated dephosphorylation and inactivation of STK3. Its function is as follows. Stress-activated, pro-apoptotic kinase which, following caspase-cleavage, enters the nucleus and induces chromatin condensation followed by internucleosomal DNA fragmentation. Key component of the Hippo signaling pathway which plays a pivotal role in organ size control and tumor suppression by restricting proliferation and promoting apoptosis. The core of this pathway is composed of a kinase cascade wherein STK3/MST2 and STK4/MST1, in complex with its regulatory protein SAV1, phosphorylates and activates LATS1/2 in complex with its regulatory protein MOB1, which in turn phosphorylates and inactivates YAP1 oncoprotein and WWTR1/TAZ. Phosphorylation of YAP1 by LATS2 inhibits its translocation into the nucleus to regulate cellular genes important for cell proliferation, cell death, and cell migration. STK3/MST2 and STK4/MST1 are required to repress proliferation of mature hepatocytes, to prevent activation of facultative adult liver stem cells (oval cells), and to inhibit tumor formation. Phosphorylates NKX2-1. Phosphorylates NEK2 and plays a role in centrosome disjunction by regulating the localization of NEK2 to centrosome, and its ability to phosphorylate CROCC and CEP250. In conjunction with SAV1, activates the transcriptional activity of ESR1 through the modulation of its phosphorylation. Positively regulates RAF1 activation via suppression of the inhibitory phosphorylation of RAF1 on 'Ser-259'. Phosphorylates MOBKL1A and RASSF2. Phosphorylates MOBKL1B on 'Thr-74'. Acts cooperatively with MOBKL1B to activate STK38. The protein is Serine/threonine-protein kinase 3 of Homo sapiens (Human).